We begin with the raw amino-acid sequence, 651 residues long: PTS system sucrose-specific EIIBCA component (651 aa).

Positions 3–86 (HQEVADRVLN…IVKTGLKEVT (84 aa)) constitute a PTS EIIB type-1 domain. Catalysis depends on C25, which acts as the Phosphocysteine intermediate; for EIIB activity. The next 10 membrane-spanning stretches (helical) occupy residues 109-129 (VLSD…LLMA), 158-178 (MINA…GFSA), 182-202 (FGGN…PSLV), 204-224 (GYSV…VFGL), 226-246 (VAQA…FILA), 264-284 (FTPM…VGPV), 303-323 (TGWI…ITGL), 345-365 (FIFP…LAIF), 404-424 (FVFA…FHVL), and 444-464 (IPAF…PTFI). The PTS EIIC type-1 domain maps to 121–481 (LVAGGLLMAL…DDRDQVKSPA (361 aa)). Residues 510-614 (DQVFSAEIMG…DPTVMLIVTN (105 aa)) enclose the PTS EIIA type-1 domain. The active-site Tele-phosphohistidine intermediate; for EIIA activity is H562.

The protein localises to the cell membrane. It catalyses the reaction N(pros)-phospho-L-histidyl-[protein](out) + sucrose = sucrose 6(G)-phosphate(in) + L-histidyl-[protein]. Functionally, the phosphoenolpyruvate-dependent sugar phosphotransferase system (sugar PTS), a major carbohydrate active transport system, catalyzes the phosphorylation of incoming sugar substrates concomitantly with their translocation across the cell membrane. This system is involved in sucrose transport. This chain is PTS system sucrose-specific EIIBCA component (scrA), found in Pediococcus pentosaceus.